The sequence spans 266 residues: uncharacterized protein (266 aa).

The signal sequence occupies residues 1 to 22 (MGYFKRVVLYIIVMVVSVFIIG). A lipid anchor (N-palmitoyl cysteine) is attached at Cys-23. A lipid anchor (S-diacylglycerol cysteine) is attached at Cys-23.

This sequence belongs to the staphylococcal tandem lipoprotein family.

It is found in the cell membrane. This is an uncharacterized protein from Staphylococcus aureus (strain N315).